The primary structure comprises 1228 residues: MHTRMQIRNRVNFGKITDLNLLPNLIYVQKKSFDWFLQSEVKDPTKRLNQGLEAVFRESFPIESPNNDMVMEYGHYVLGEPKRDPQECKDTDSSFAVPLKAVIRLIIKDTGEIREQVVYMGDLPVMTDHGTFIINGAERVVVSQLHRSPGIFFSYDQVRDTFSARVIPYRGSWLEFEMDNKGILVAKIDRKKKFPATLLVKAMGMGTNEEVLRLFYGSSKMKIAGANPKDLKRLIGRRTIADIINMETGEVMLDAGSKINEDNISILREMKVKEVDVIEFPKGKDNPVLINCLEKDGVNDYEDAVKKFHTIMRPGEPSTIENAEAELKRLFFSPKTFDLGIVGRYKINSKFEFNNPKEFSKADDRVLRKQDIIETVRYLVMLMSEAENYYPDDIDHLGNRRIRSVGELIANQLKLGFSRVERVIKERMTVQEPEQQTPQLLISIKPITAVINEFFGSSQLSQFMDQTNPLAELTHKRRLNALGPGGLSRDRAGFEVRDVHYSHYGRMCPIETPEGPNIGLILSMSSFARVNDYGFIETPYRLVKNGKVQKQVEYLTADKEEYHYMAQSNSTVDEKGEFTSKLISTRHRGDFPFRSPAEIQYMDLAPLQVVSVSTALIPFLEHDDANRALMGSNMQRQAVPLLTEEAPFVGTGMEARAAYDAGVCIVAKKDGVVSKVDATGVWIKEDQSKEIVHYPLIKFKKTNQGTCFNQKPNVSMLHTTTGGKVSKVSKERVEVTTPNGEKETHELLLSDEVQFHAVVKEGQEVGIGAPVAGQIIKGEKYGDFGQILQKGTVLANGPSTDAGYLALGRNVLVAFMPWEGYNFEDAILISERIIKDDVFSSIHIEEFEIQARETKLGQEQITRDIPNLSDKAFRDLDESGVIRVGAEVKPGDILVGMVTPKGETDLTPEYKLLHSIFGEKAKEVRDSSLRMPNGFEGTVIDIKRYSRETGDELAAGVEEMVKVYVARKRKLLVGDKMAGRHGNKGVVARVMAQEDMPYMEDGSPVDIVLNPLGVPSRMNLGQIFETQLGFAAKKLGINFETPVFDGASEGDVNDFCKKAGLPENSKFQLYDGRTGEKFINQVFCGYIYMLKLAHLVDDKIHARSTGPYSLVTQQPLGGKAQFGGQRLGEMEVWALEAYGASHTLQELLTIKSDDMLGRARIYEAIVKGIHSIKPGIPESFNVLVQELRGLALDIIIKDSEGLEVDISDYEDEFSKNKKKIKFETIENV.

The protein belongs to the RNA polymerase beta chain family. The RNAP catalytic core consists of 2 alpha, 1 beta, 1 beta' and 1 omega subunit. When a sigma factor is associated with the core the holoenzyme is formed, which can initiate transcription.

It catalyses the reaction RNA(n) + a ribonucleoside 5'-triphosphate = RNA(n+1) + diphosphate. DNA-dependent RNA polymerase catalyzes the transcription of DNA into RNA using the four ribonucleoside triphosphates as substrates. This is DNA-directed RNA polymerase subunit beta from Leptospira biflexa.